The following is a 59-amino-acid chain: Conotoxin reg3.15 (59 aa).

The N-terminal stretch at 1-15 is a signal peptide; that stretch reads RVLLTICLLLFPLTA. Residues 16-44 constitute a propeptide that is removed on maturation; the sequence is IPLGGDQPAERMRNVRSAVQDPRFDSVGW. Intrachain disulfides connect C45–C59, C46–C55, and C51–C58.

Belongs to the conotoxin M superfamily. In terms of tissue distribution, expressed by the venom duct.

The protein resides in the secreted. This is Conotoxin reg3.15 from Conus regius (Crown cone).